A 157-amino-acid polypeptide reads, in one-letter code: Crossover junction endodeoxyribonuclease RuvC (157 aa).

Active-site residues include aspartate 7, glutamate 66, and aspartate 139. Aspartate 7, glutamate 66, and aspartate 139 together coordinate Mg(2+).

It belongs to the RuvC family. Homodimer which binds Holliday junction (HJ) DNA. The HJ becomes 2-fold symmetrical on binding to RuvC with unstacked arms; it has a different conformation from HJ DNA in complex with RuvA. In the full resolvosome a probable DNA-RuvA(4)-RuvB(12)-RuvC(2) complex forms which resolves the HJ. Requires Mg(2+) as cofactor.

The protein localises to the cytoplasm. The catalysed reaction is Endonucleolytic cleavage at a junction such as a reciprocal single-stranded crossover between two homologous DNA duplexes (Holliday junction).. Its function is as follows. The RuvA-RuvB-RuvC complex processes Holliday junction (HJ) DNA during genetic recombination and DNA repair. Endonuclease that resolves HJ intermediates. Cleaves cruciform DNA by making single-stranded nicks across the HJ at symmetrical positions within the homologous arms, yielding a 5'-phosphate and a 3'-hydroxyl group; requires a central core of homology in the junction. The consensus cleavage sequence is 5'-(A/T)TT(C/G)-3'. Cleavage occurs on the 3'-side of the TT dinucleotide at the point of strand exchange. HJ branch migration catalyzed by RuvA-RuvB allows RuvC to scan DNA until it finds its consensus sequence, where it cleaves and resolves the cruciform DNA. The polypeptide is Crossover junction endodeoxyribonuclease RuvC (Helicobacter pylori (strain Shi470)).